The primary structure comprises 132 residues: Agouti-signaling protein (132 aa).

The first 22 residues, 1 to 22 (MDVTRLLLATLLVFLCFFTAYS), serve as a signal peptide directing secretion. Asparagine 39 carries N-linked (GlcNAc...) asparagine glycosylation. Positions 61–87 (QISRKEAEKKRSSKKEASMKKVARPRT) are disordered. Residues 63-79 (SRKEAEKKRSSKKEASM) show a composition bias toward basic and acidic residues. 5 disulfides stabilise this stretch: cysteine 93/cysteine 108, cysteine 100/cysteine 114, cysteine 107/cysteine 125, cysteine 111/cysteine 132, and cysteine 116/cysteine 123. Residues 93–132 (CVATRDSCKSPAPACCDPCASCQCRFFRSACSCRVLSLNC) form the Agouti domain.

Its subcellular location is the secreted. Its function is as follows. Involved in the regulation of melanogenesis. The binding of ASP to MC1R precludes alpha-MSH initiated signaling and thus blocks production of cAMP, leading to a down-regulation of eumelanogenesis (brown/black pigment) and thus increasing synthesis of pheomelanin (yellow/red pigment). This chain is Agouti-signaling protein (ASIP), found in Macaca nigra (Celebes black macaque).